Reading from the N-terminus, the 369-residue chain is Molybdenum import ATP-binding protein ModC (369 aa).

An ABC transporter domain is found at 7 to 243; the sequence is PGQAGIHARF…LDLPMAMTDD (237 aa). 41 to 48 contacts ATP; sequence GQSGSGKT. The Mop domain occupies 304–369; that stretch reads EGSILNVLAV…AQIKAVSLLA (66 aa).

This sequence belongs to the ABC transporter superfamily. Molybdate importer (TC 3.A.1.8) family. As to quaternary structure, the complex is composed of two ATP-binding proteins (ModC), two transmembrane proteins (ModB) and a solute-binding protein (ModA).

It is found in the cell inner membrane. The enzyme catalyses molybdate(out) + ATP + H2O = molybdate(in) + ADP + phosphate + H(+). Part of the ABC transporter complex ModABC involved in molybdenum import. Responsible for energy coupling to the transport system. This is Molybdenum import ATP-binding protein ModC from Bordetella pertussis (strain Tohama I / ATCC BAA-589 / NCTC 13251).